Consider the following 145-residue polypeptide: Cytochrome b (145 aa).

Residues 38-58 form a helical membrane-spanning segment; it reads FFALHFLLPFVLAALALMHLI. Residues H42 and H56 each coordinate heme b. H61 serves as a coordination point for a ubiquinone. Residues 85 to 105 form a helical membrane-spanning segment; the sequence is FIFKDLVTIFIFFIVLSIFVF.

Belongs to the cytochrome b family. In terms of assembly, fungal cytochrome b-c1 complex contains 10 subunits; 3 respiratory subunits, 2 core proteins and 5 low-molecular weight proteins. Cytochrome b-c1 complex is a homodimer. Requires heme b as cofactor.

The protein localises to the mitochondrion inner membrane. In terms of biological role, component of the ubiquinol-cytochrome c reductase complex (complex III or cytochrome b-c1 complex) that is part of the mitochondrial respiratory chain. The b-c1 complex mediates electron transfer from ubiquinol to cytochrome c. Contributes to the generation of a proton gradient across the mitochondrial membrane that is then used for ATP synthesis. The chain is Cytochrome b (cob) from Aspergillus flavus.